The following is a 397-amino-acid chain: Phosphoglycerate kinase (397 aa).

Residues 21-23 (DFN), Arg37, 60-63 (HLGR), Arg119, and Arg152 contribute to the substrate site. Residues Lys203, Gly294, Glu325, and 354-357 (GGDS) contribute to the ATP site.

It belongs to the phosphoglycerate kinase family. As to quaternary structure, monomer.

It is found in the cytoplasm. It carries out the reaction (2R)-3-phosphoglycerate + ATP = (2R)-3-phospho-glyceroyl phosphate + ADP. Its pathway is carbohydrate degradation; glycolysis; pyruvate from D-glyceraldehyde 3-phosphate: step 2/5. This chain is Phosphoglycerate kinase, found in Chlorobaculum tepidum (strain ATCC 49652 / DSM 12025 / NBRC 103806 / TLS) (Chlorobium tepidum).